A 622-amino-acid chain; its full sequence is Low affinity potassium transport system protein Kup (622 aa).

Helical transmembrane passes span 9–29, 49–69, 103–123, 137–157, 165–185, 213–233, 247–267, 276–296, 337–357, 363–383, 396–416, and 419–439; these read LPAI…TSPL, VFGF…IKYL, VIMG…TPAI, PQLD…LFMI, VGKL…GLGL, VSFI…ALYA, WFTV…ALLL, PFFL…AALA, IYIP…IVSF, LAAA…ILST, FVAL…TANL, and LLSG…VMTT.

The protein belongs to the HAK/KUP transporter (TC 2.A.72) family.

It is found in the cell inner membrane. It catalyses the reaction K(+)(in) + H(+)(in) = K(+)(out) + H(+)(out). Functionally, responsible for the low-affinity transport of potassium into the cell. Likely operates as a K(+):H(+) symporter. This Shigella boydii serotype 18 (strain CDC 3083-94 / BS512) protein is Low affinity potassium transport system protein Kup.